A 273-amino-acid chain; its full sequence is MGRSRSRSSSRSKHTKSSKHNKKRSRSRSRSRDKERVRKRSKSRESKRNRRRESRSRSRSTNTAVSRRERDRERASSPPDRIDIFGRTVSKRSSLDEKQKREEEEKKAEFERQRKIRQQEIEEKLIEEETARRVEELVAKRVEEELEKRKDEIEREVLRRVEEAKRIMEKQLLEELERQRQAELAAQKAREEEERAKREELERILEENNRKIAEAQAKLAEEQLRIVEEQRKIHEERMKLEQERQRQQKEEQKIILGKGKSRPKLSFSLKTQD.

Basic residues-rich tracts occupy residues 1-29 (MGRS…RSRS) and 37-58 (VRKR…RSRS). The segment at 1-74 (MGRSRSRSSS…VSRRERDRER (74 aa)) is necessary and sufficient for RNA binding. The disordered stretch occupies residues 1-113 (MGRSRSRSSS…EEKKAEFERQ (113 aa)). Residues serine 58 and serine 60 each carry the phosphoserine modification. Phosphothreonine is present on threonine 61. 2 stretches are compositionally biased toward basic and acidic residues: residues 66 to 84 (SRRE…RIDI) and 93 to 113 (SSLD…FERQ). A necessary and sufficient for transcriptional regulation region spans residues 75 to 273 (ASSPPDRIDI…KLSFSLKTQD (199 aa)). Residues serine 76 and serine 77 each carry the phosphoserine modification. The LXXLL motif 1; degenerate signature appears at 172–176 (LLEEL). The short motif at 201-205 (LERIL) is the LXXLL motif 2; degenerate element. Residues 238–253 (MKLEQERQRQQKEEQK) are compositionally biased toward basic and acidic residues. Residues 238-273 (MKLEQERQRQQKEEQKIILGKGKSRPKLSFSLKTQD) form a disordered region. The residue at position 266 (serine 266) is a Phosphoserine.

Belongs to the ARGLU1 family. In terms of assembly, interacts with MED1; the interaction is direct. Interacts with PUF60, U2AF2 and JMJD6; may interact with other proteins involved in RNA processing and splicing.

The protein localises to the nucleus. Its subcellular location is the nucleus speckle. It is found in the chromosome. Dual function regulator of gene expression; regulator of transcription and modulator of alternative splicing. General coactivator of nuclear receptor-induced gene expression, including genes activated by the glucocorticoid receptor NR3C1. Binds to a subset of pre-mRNAs and to components of the spliceosome machinery to directly modulate basal alternative splicing; involved in simple and complex cassette exon splicing events. Binds its own pre-mRNA and regulates its alternative splicing and degradation; one of the alternatively spliced products is a stable intronic sequence RNA (sisRNA) that binds the protein to regulate its ability to affect splicing. Binding of the sisRNA stimulates phase separation and localization to nuclear speckles, which may contribute to activation of nuclear receptor-induced gene expression. May also indirectly modulate alternative splicing. Regulates transcription of genes involved in heart development, neuronal cell function, protein localization and chromatin localization. Regulates splicing of genes involved in neurogenesis and chromatin organization. Essential for central nervous system development. Required for the estrogen-dependent expression of ESR1 target genes. Can act in cooperation with MED1. In Bos taurus (Bovine), this protein is Arginine and glutamate-rich protein 1 (ARGLU1).